The sequence spans 175 residues: ADP-ribosylation factor 6 (175 aa).

Glycine 2 is lipidated: N-myristoyl glycine. Lysine 3 carries the N6-myristoyl lysine lipid modification. GTP is bound by residues 23-28, 41-44, 63-67, 122-125, and 155-156; these read AAGKTT, TIPT, DVGGQ, NKQD, and CA.

It belongs to the small GTPase superfamily. Arf family.

It is found in the cytoplasm. The protein resides in the cytosol. The protein localises to the cell membrane. Its subcellular location is the endosome membrane. It localises to the recycling endosome membrane. It is found in the cell projection. The protein resides in the filopodium membrane. The protein localises to the ruffle. Its subcellular location is the cleavage furrow. It localises to the midbody. It is found in the midbody ring. The catalysed reaction is GTP + H2O = GDP + phosphate + H(+). Functionally, GTP-binding protein involved in protein trafficking; regulates endocytic recycling and cytoskeleton remodeling. May modulate vesicle budding and uncoating within the Golgi apparatus. May contribute to the regulation of dendritic branching, filopodia extension and dendritic spine development. The polypeptide is ADP-ribosylation factor 6 (ARF6) (Gallus gallus (Chicken)).